The following is a 231-amino-acid chain: 2-amino-5-formylamino-6-ribosylaminopyrimidin-4(3H)-one 5'-monophosphate deformylase (231 aa).

The Fe cation site is built by Glu29, His31, Asp40, and His110.

Belongs to the creatininase superfamily. FAPy deformylase family. As to quaternary structure, homodimer. The cofactor is Fe(2+). Zn(2+) is required as a cofactor.

The enzyme catalyses 2-amino-5-formylamino-6-(5-phospho-D-ribosylamino)pyrimidin-4(3H)-one + H2O = 2,5-diamino-6-(1-D-ribosylamino)pyrimidin-4(3H)-one 5'-phosphate + formate + H(+). The protein operates within cofactor biosynthesis; coenzyme F420 biosynthesis. It participates in cofactor biosynthesis; riboflavin biosynthesis. In terms of biological role, catalyzes the hydrolysis of the formamide of 2-amino-5-formylamino-6-ribosylamino-4(3H)-pyrimidinone 5'-monophosphate (FAPy) to form 2,5-diamino-6-ribosylamino-4(3H)-pyrimidinone 5'-phosphate (APy). The protein is 2-amino-5-formylamino-6-ribosylaminopyrimidin-4(3H)-one 5'-monophosphate deformylase of Methanothermobacter marburgensis (strain ATCC BAA-927 / DSM 2133 / JCM 14651 / NBRC 100331 / OCM 82 / Marburg) (Methanobacterium thermoautotrophicum).